Here is a 178-residue protein sequence, read N- to C-terminus: Large ribosomal subunit protein uL6 (178 aa).

The protein belongs to the universal ribosomal protein uL6 family. In terms of assembly, part of the 50S ribosomal subunit.

This protein binds to the 23S rRNA, and is important in its secondary structure. It is located near the subunit interface in the base of the L7/L12 stalk, and near the tRNA binding site of the peptidyltransferase center. The polypeptide is Large ribosomal subunit protein uL6 (Campylobacter hominis (strain ATCC BAA-381 / DSM 21671 / CCUG 45161 / LMG 19568 / NCTC 13146 / CH001A)).